The following is a 792-amino-acid chain: Endonuclease MutS2 (792 aa).

Position 344 to 351 (344 to 351) interacts with ATP; the sequence is GPNTGGKT. Residues 716–791 form the Smr domain; it reads IHLRGLHVEE…GLGVTVVYLE (76 aa).

It belongs to the DNA mismatch repair MutS family. MutS2 subfamily. In terms of assembly, homodimer. Binds to stalled ribosomes, contacting rRNA.

Endonuclease that is involved in the suppression of homologous recombination and thus may have a key role in the control of bacterial genetic diversity. Its function is as follows. Acts as a ribosome collision sensor, splitting the ribosome into its 2 subunits. Detects stalled/collided 70S ribosomes which it binds and splits by an ATP-hydrolysis driven conformational change. Acts upstream of the ribosome quality control system (RQC), a ribosome-associated complex that mediates the extraction of incompletely synthesized nascent chains from stalled ribosomes and their subsequent degradation. Probably generates substrates for RQC. The chain is Endonuclease MutS2 from Thermomicrobium roseum (strain ATCC 27502 / DSM 5159 / P-2).